A 312-amino-acid chain; its full sequence is DDRGK domain-containing protein 1 (312 aa).

The Lumenal portion of the chain corresponds to 1–2; the sequence is ME. A helical transmembrane segment spans residues 3–23; the sequence is LIILVGIAIALLVVIITLYLL. The Cytoplasmic portion of the chain corresponds to 24–312; that stretch reads QKKNAAPETK…ISAGGEEASS (289 aa). The tract at residues 30–163 is disordered; that stretch reads PETKPAAAPQ…KQQEDLEAEV (134 aa). The segment covering 52–85 has biased composition (low complexity); sequence RRAQIARNQRNRLRQNAPAAPAGQVAPAAGAPAA. Residues 90–99 show a composition bias toward acidic residues; sequence DHEDEGQVDA. The span at 110–163 shows a compositional bias: basic and acidic residues; the sequence is LDEKMGAKKRAKMEAKEQKRLQREQELHDREQRKVKEAKEEAERKQQEDLEAEV.

This sequence belongs to the DDRGK1 family. As to quaternary structure, interacts with Atg9; the interaction is transient.

It is found in the endoplasmic reticulum membrane. Functionally, substrate adapter for ufmylation, the covalent attachment of the ubiquitin-like modifier UFM1 to substrate proteins. Required for ufmylation of Atg9; protects the nervous system during aging, possibly by stabilizing Atg9 and supporting its function. This chain is DDRGK domain-containing protein 1, found in Drosophila erecta (Fruit fly).